Reading from the N-terminus, the 396-residue chain is DNA polymerase IV (396 aa).

Residues 6–186 (IIHVDMDAFY…LPISRLWGVG (181 aa)) enclose the UmuC domain. Mg(2+)-binding residues include Asp10 and Asp104. The active site involves Glu105.

Belongs to the DNA polymerase type-Y family. Monomer. Mg(2+) is required as a cofactor.

Its subcellular location is the cytoplasm. It catalyses the reaction DNA(n) + a 2'-deoxyribonucleoside 5'-triphosphate = DNA(n+1) + diphosphate. Poorly processive, error-prone DNA polymerase involved in untargeted mutagenesis. Copies undamaged DNA at stalled replication forks, which arise in vivo from mismatched or misaligned primer ends. These misaligned primers can be extended by PolIV. Exhibits no 3'-5' exonuclease (proofreading) activity. May be involved in translesional synthesis, in conjunction with the beta clamp from PolIII. In Desulfatibacillum aliphaticivorans, this protein is DNA polymerase IV.